A 258-amino-acid chain; its full sequence is Tryptophan synthase alpha chain (258 aa).

Residues Glu47 and Asp58 each act as proton acceptor in the active site.

Belongs to the TrpA family. As to quaternary structure, tetramer of two alpha and two beta chains.

The catalysed reaction is (1S,2R)-1-C-(indol-3-yl)glycerol 3-phosphate + L-serine = D-glyceraldehyde 3-phosphate + L-tryptophan + H2O. It participates in amino-acid biosynthesis; L-tryptophan biosynthesis; L-tryptophan from chorismate: step 5/5. Its function is as follows. The alpha subunit is responsible for the aldol cleavage of indoleglycerol phosphate to indole and glyceraldehyde 3-phosphate. This is Tryptophan synthase alpha chain from Bacillus mycoides (strain KBAB4) (Bacillus weihenstephanensis).